The following is a 132-amino-acid chain: UPF0299 membrane protein YohJ (132 aa).

Helical transmembrane passes span 7 to 27 (IIWQYIRAFVLIYACLYAGIF), 31 to 51 (LLPITIPGSIIGMLILFVLLA), 63 to 83 (GCYVLIRYMALLFVPIGVGVM), and 93 to 113 (FGPVVVSCAISTLVVFVVVSW).

Belongs to the UPF0299 family.

It localises to the cell inner membrane. This chain is UPF0299 membrane protein YohJ, found in Salmonella agona (strain SL483).